The sequence spans 477 residues: Aspartyl/glutamyl-tRNA(Asn/Gln) amidotransferase subunit B (477 aa).

The protein belongs to the GatB/GatE family. GatB subfamily. As to quaternary structure, heterotrimer of A, B and C subunits.

The catalysed reaction is L-glutamyl-tRNA(Gln) + L-glutamine + ATP + H2O = L-glutaminyl-tRNA(Gln) + L-glutamate + ADP + phosphate + H(+). The enzyme catalyses L-aspartyl-tRNA(Asn) + L-glutamine + ATP + H2O = L-asparaginyl-tRNA(Asn) + L-glutamate + ADP + phosphate + 2 H(+). Its function is as follows. Allows the formation of correctly charged Asn-tRNA(Asn) or Gln-tRNA(Gln) through the transamidation of misacylated Asp-tRNA(Asn) or Glu-tRNA(Gln) in organisms which lack either or both of asparaginyl-tRNA or glutaminyl-tRNA synthetases. The reaction takes place in the presence of glutamine and ATP through an activated phospho-Asp-tRNA(Asn) or phospho-Glu-tRNA(Gln). In Thioalkalivibrio sulfidiphilus (strain HL-EbGR7), this protein is Aspartyl/glutamyl-tRNA(Asn/Gln) amidotransferase subunit B.